We begin with the raw amino-acid sequence, 370 residues long: sn-glycerol-3-phosphate import ATP-binding protein UgpC (370 aa).

The region spanning 4–236 (LSLKNIAKRY…PATAFVAAFM (233 aa)) is the ABC transporter domain. 38–45 (GPSGCGKS) provides a ligand contact to ATP.

Belongs to the ABC transporter superfamily. sn-glycerol-3-phosphate importer (TC 3.A.1.1.3) family. In terms of assembly, the complex is composed of two ATP-binding proteins (UgpC), two transmembrane proteins (UgpA and UgpE) and a solute-binding protein (UgpB).

Its subcellular location is the cell inner membrane. It catalyses the reaction sn-glycerol 3-phosphate(out) + ATP + H2O = sn-glycerol 3-phosphate(in) + ADP + phosphate + H(+). Its function is as follows. Part of the ABC transporter complex UgpBAEC involved in sn-glycerol-3-phosphate (G3P) import. Responsible for energy coupling to the transport system. The chain is sn-glycerol-3-phosphate import ATP-binding protein UgpC from Chromobacterium violaceum (strain ATCC 12472 / DSM 30191 / JCM 1249 / CCUG 213 / NBRC 12614 / NCIMB 9131 / NCTC 9757 / MK).